We begin with the raw amino-acid sequence, 935 residues long: C-1-tetrahydrofolate synthase, cytoplasmic (935 aa).

M1 is modified (N-acetylmethionine). Residues 2–291 (APAEILNGKE…MLMQSTVESA (290 aa)) form a methylenetetrahydrofolate dehydrogenase and methenyltetrahydrofolate cyclohydrolase (D/C) domain region. Residues 52 to 56 (YINVK) and 99 to 101 (VQL) each bind substrate. The active site involves K56. Residues 172 to 174 (GRS) and S197 each bind NADP(+). 272–276 (PGGVG) is a substrate binding site. Residues 310–935 (LNLKTPVPSD…PETEQVNGLF (626 aa)) form a formyltetrahydrofolate synthetase domain region. Residue S318 is modified to Phosphoserine. 380 to 387 (TPLGEGKS) serves as a coordination point for ATP. A phosphoserine mark is found at S413 and S490.

It in the N-terminal section; belongs to the tetrahydrofolate dehydrogenase/cyclohydrolase family. This sequence in the C-terminal section; belongs to the formate--tetrahydrofolate ligase family. Homodimer. As to expression, ubiquitous.

The protein localises to the cytoplasm. It carries out the reaction (6R)-5,10-methylene-5,6,7,8-tetrahydrofolate + NADP(+) = (6R)-5,10-methenyltetrahydrofolate + NADPH. The enzyme catalyses (6R)-5,10-methenyltetrahydrofolate + H2O = (6R)-10-formyltetrahydrofolate + H(+). The catalysed reaction is (6S)-5,6,7,8-tetrahydrofolate + formate + ATP = (6R)-10-formyltetrahydrofolate + ADP + phosphate. The protein operates within one-carbon metabolism; tetrahydrofolate interconversion. Trifunctional enzyme that catalyzes the interconversion of three forms of one-carbon-substituted tetrahydrofolate: (6R)-5,10-methylene-5,6,7,8-tetrahydrofolate, 5,10-methenyltetrahydrofolate and (6S)-10-formyltetrahydrofolate. These derivatives of tetrahydrofolate are differentially required in nucleotide and amino acid biosynthesis, (6S)-10-formyltetrahydrofolate being required for purine biosynthesis while (6R)-5,10-methylene-5,6,7,8-tetrahydrofolate is used for serine and methionine biosynthesis for instance. The polypeptide is C-1-tetrahydrofolate synthase, cytoplasmic (MTHFD1) (Homo sapiens (Human)).